A 753-amino-acid chain; its full sequence is 5-methyltetrahydropteroyltriglutamate--homocysteine methyltransferase (753 aa).

Residues 17-20 and Lys-117 each bind 5-methyltetrahydropteroyltri-L-glutamate; that span reads RELK. L-homocysteine contacts are provided by residues 431–433 and Glu-484; that span reads IGS. L-methionine contacts are provided by residues 431-433 and Glu-484; that span reads IGS. 5-methyltetrahydropteroyltri-L-glutamate contacts are provided by residues 515–516 and Trp-561; that span reads RC. Residue Asp-599 participates in L-homocysteine binding. Asp-599 is an L-methionine binding site. A 5-methyltetrahydropteroyltri-L-glutamate-binding site is contributed by Glu-605. Residues His-641, Cys-643, and Glu-665 each coordinate Zn(2+). His-694 functions as the Proton donor in the catalytic mechanism. Cys-726 is a binding site for Zn(2+).

Belongs to the vitamin-B12 independent methionine synthase family. It depends on Zn(2+) as a cofactor.

It catalyses the reaction 5-methyltetrahydropteroyltri-L-glutamate + L-homocysteine = tetrahydropteroyltri-L-glutamate + L-methionine. Its pathway is amino-acid biosynthesis; L-methionine biosynthesis via de novo pathway; L-methionine from L-homocysteine (MetE route): step 1/1. Its function is as follows. Catalyzes the transfer of a methyl group from 5-methyltetrahydrofolate to homocysteine resulting in methionine formation. The chain is 5-methyltetrahydropteroyltriglutamate--homocysteine methyltransferase from Enterobacter sp. (strain 638).